A 97-amino-acid polypeptide reads, in one-letter code: Protein MxiI (97 aa).

To S.typhimurium PrgJ.

Functionally, necessary for the secretion of IPA invasins. The chain is Protein MxiI (mxiI) from Shigella flexneri.